A 1162-amino-acid polypeptide reads, in one-letter code: Paired amphipathic helix protein Sin3-like 5 (1162 aa).

The disordered stretch occupies residues 1 to 37 (MKRVREEVYVEPQMRGPTVSSRGETNGRPSTISGGGT). A compositionally biased stretch (polar residues) spans 18–30 (TVSSRGETNGRPS). PAH domains are found at residues 28-109 (RPST…LPKG) and 123-193 (KPVD…LPDF). Disordered stretches follow at residues 702–727 (RVSDVSMGGHKVEREEGELSPTESCE), 743–779 (QKLPDNEISNTDREPKEGACGTEAVTRSNALPEDDDN), 803–830 (GGQVSSDEEHKGAESENEAGGMVNSNEG), and 1121–1143 (KKATLNPTGPENVKTSDSSELSR). The residue at position 817 (serine 817) is a Phosphoserine. The segment covering 1123–1139 (ATLNPTGPENVKTSDSS) has biased composition (polar residues).

Its subcellular location is the nucleus. Functionally, acts as a transcriptional repressor. Plays roles in regulating gene expression and genome stability. The chain is Paired amphipathic helix protein Sin3-like 5 (SNL5) from Arabidopsis thaliana (Mouse-ear cress).